The chain runs to 604 residues: Prostaglandin G/H synthase 2 (604 aa).

The N-terminal stretch at 1–17 (MLARALLLCAAVALSGA) is a signal peptide. One can recognise an EGF-like domain in the interval 18–55 (ANPCCSHPCQNRGVCMSVGFDQYKCDCTRTGFYGENCT). 4 disulfide bridges follow: Cys-21–Cys-32, Cys-22–Cys-145, Cys-26–Cys-42, and Cys-44–Cys-54. An N-linked (GlcNAc...) asparagine glycan is attached at Asn-53. Residue Arg-106 coordinates substrate. N-linked (GlcNAc...) asparagine glycosylation occurs at Asn-130. His-193 functions as the Proton acceptor in the catalytic mechanism. Tyr-341 is a substrate binding site. Catalysis depends on Tyr-371, which acts as the For cyclooxygenase activity. Residue His-374 participates in heme b binding. N-linked (GlcNAc...) asparagine glycosylation occurs at Asn-396. Cys-526 is modified (S-nitrosocysteine). An intrachain disulfide couples Cys-555 to Cys-561. Position 565 is an O-acetylserine (Ser-565). An N-linked (GlcNAc...) asparagine glycan is attached at Asn-580.

Belongs to the prostaglandin G/H synthase family. As to quaternary structure, homodimer. Requires heme b as cofactor. Post-translationally, S-nitrosylation by NOS2 (iNOS) activates enzyme activity. S-nitrosylation may take place on different Cys residues in addition to Cys-526. Acetylated at Ser-565 by SPHK1. During neuroinflammation, acetylation by SPHK1 promotes neuronal secretion of specialized preresolving mediators (SPMs), especially 15-R-lipoxin A4, which results in an increase of phagocytic microglia.

It localises to the microsome membrane. The protein localises to the endoplasmic reticulum membrane. Its subcellular location is the nucleus inner membrane. It is found in the nucleus outer membrane. The enzyme catalyses (5Z,8Z,11Z,14Z)-eicosatetraenoate + AH2 + 2 O2 = prostaglandin H2 + A + H2O. It carries out the reaction (5Z,8Z,11Z,14Z)-eicosatetraenoate + 2 O2 = prostaglandin G2. The catalysed reaction is prostaglandin G2 + AH2 = prostaglandin H2 + A + H2O. It catalyses the reaction (5Z,8Z,11Z,14Z,17Z)-eicosapentaenoate + 2 O2 = prostaglandin G3. The enzyme catalyses prostaglandin G3 + AH2 = prostaglandin H3 + A + H2O. It carries out the reaction (8Z,11Z,14Z)-eicosatrienoate + 2 O2 = prostaglandin G1. The catalysed reaction is prostaglandin G1 + AH2 = prostaglandin H1 + A + H2O. It catalyses the reaction 2-(5Z,8Z,11Z,14Z)-eicosatetraenoyl-sn-glycero-3-phosphoethanolamine + 2 O2 = 2-(prostaglandin G2)-sn-glycero-3-phosphoethanolamine. The enzyme catalyses 2-(prostaglandin G2)-sn-glycero-3-phosphoethanolamine + AH2 = 2-(prostaglandin H2)-sn-glycero-3-phosphoethanolamine + A + H2O. It carries out the reaction 2-(5Z,8Z,11Z,14Z)-eicosatetraenoyl-sn-glycero-3-phosphocholine + 2 O2 = 2-(prostaglandin G2)-sn-glycero-3-phosphocholine. The catalysed reaction is 2-(prostaglandin G2)-sn-glycero-3-phosphocholine + AH2 = 2-(prostaglandin H2)-sn-glycero-3-phosphocholine + A + H2O. It catalyses the reaction (15S)-hydroperoxy-(5Z,8Z,11Z,13E)-eicosatetraenoate + AH2 = (15S)-hydroxy-(5Z,8Z,11Z,13E)-eicosatetraenoate + A + H2O. The enzyme catalyses 2-(5Z,8Z,11Z,14Z)-eicosatetraenoyl-sn-glycero-3-phosphocholine + AH2 + O2 = 2-[(15S)-hydroxy-(5Z,8Z,11Z,13E)-eicosatetraenoyl]-sn-glycero-3-phosphocholine + A + H2O. It carries out the reaction 2-(5Z,8Z,11Z,14Z)-eicosatetraenoyl-sn-glycero-3-phosphocholine + AH2 + O2 = 2-[(15R)-hydroxy-(5Z,8Z,11Z,13E)-eicosatetraenoyl]-sn-glycero-3-phosphocholine + A + H2O. The catalysed reaction is 2-(5Z,8Z,11Z,14Z)-eicosatetraenoyl-sn-glycero-3-phosphocholine + AH2 + O2 = 2-[(11R)-hydroxy-(5Z,8Z,12E,14Z)-eicosatetraenoyl]-sn-glycero-3-phosphocholine + A + H2O. It catalyses the reaction (9Z,12Z)-octadecadienoate + AH2 + O2 = 9-hydroxy-(10E,12Z)-octadecadienoate + A + H2O. The enzyme catalyses (9Z,12Z)-octadecadienoate + AH2 + O2 = 13-hydroxy-(9Z,11E)-octadecadienoate + A + H2O. It carries out the reaction (5Z,8Z,11Z,14Z)-eicosatetraenoate + AH2 + O2 = (15R)-hydroxy-(5Z,8Z,11Z,13E)-eicosatetraenoate + A + H2O. The catalysed reaction is (5Z,8Z,11Z,14Z)-eicosatetraenoate + AH2 + O2 = (11R)-hydroxy-(5Z,8Z,12E,14Z)-eicosatetraenoate + A + H2O. It catalyses the reaction (5Z,8Z,11Z,14Z,17Z)-eicosapentaenoate + AH2 + O2 = (11R)-hydroxy-(5Z,8Z,12E,14Z,17Z)-eicosapentaenoate + A + H2O. The enzyme catalyses (5Z,8Z,11Z,14Z,17Z)-eicosapentaenoate + AH2 + O2 = (18S)-hydroxy-(5Z,8Z,11Z,14Z,16E)-eicosapentaenoate + A + H2O. It carries out the reaction (5Z,8Z,11Z,14Z,17Z)-eicosapentaenoate + AH2 + O2 = (18R)-hydroxy-(5Z,8Z,11Z,14Z,16E)-eicosapentaenoate + A + H2O. The catalysed reaction is (5Z,8Z,11Z,14Z,17Z)-eicosapentaenoate + AH2 + O2 = (15R)-hydroxy-(5Z,8Z,11Z,13E,17Z)-eicosapentaenoate + A + H2O. It catalyses the reaction (5Z,8Z,11Z,14Z,17Z)-eicosapentaenoate + AH2 + O2 = (15S)-hydroxy-(5Z,8Z,11Z,13E,17Z)-eicosapentaenoate + A + H2O. The enzyme catalyses (7Z,10Z,13Z,16Z,19Z)-docosapentaenoate + AH2 + O2 = 13R-hydroxy-(7Z,10Z,14E,16Z,19Z)-docosapentaenoate + A + H2O. It carries out the reaction (4Z,7Z,10Z,13Z,16Z,19Z)-docosahexaenoate + AH2 + O2 = 13-hydroxy-(4Z,7Z,10Z,14E,16Z,19Z)-docosahexaenoate + A + H2O. The catalysed reaction is (5S)-hydroxy-(6E,8Z,11Z,14Z)-eicosatetraenoate + AH2 + O2 = (5S,15R)-dihydroxy-(6E,8Z,11Z,13E)-eicosatetraenoate + A + H2O. It catalyses the reaction (4Z,7Z,10Z,13Z,16Z,19Z)-docosahexaenoate + AH2 + O2 = 17R-hydroxy-(4Z,7Z,10Z,13Z,15E,19Z)-docosahexaenoate + A + H2O. The enzyme catalyses (5S)-hydroxy-(6E,8Z,11Z,14Z)-eicosatetraenoate + AH2 + O2 = (5S,15S)-dihydroxy-(6E,8Z,11Z,13E)-eicosatetraenoate + A + H2O. It carries out the reaction (5S)-hydroxy-(6E,8Z,11Z,14Z)-eicosatetraenoate + AH2 + O2 = (5S,11R)-dihydroxy-(6E,8Z,12E,14Z)-eicosatetraenoate + A + H2O. The catalysed reaction is 2-(5Z,8Z,11Z,14Z-eicosatetraenoyl)-glycerol + 2 O2 = 2-glyceryl-prostaglandin G2. It catalyses the reaction 2-glyceryl-prostaglandin G2 + AH2 = 2-glyceryl-prostaglandin H2 + A + H2O. The enzyme catalyses (5Z,8Z,11Z,14Z)-eicosatetraenoate + O2 = (15R)-hydroperoxy-(5Z,8Z,11Z,13E)-eicosatetraenoate. It carries out the reaction (5Z,8Z,11Z,14Z)-eicosatetraenoate + O2 = 11R-hydroperoxy-(5Z,8Z,12E,14Z)-eicosatetraenoate. The catalysed reaction is (9Z,12Z)-octadecadienoate + AH2 + O2 = (9R)-hydroxy-(10E,12Z)-octadecadienoate + A + H2O. It catalyses the reaction (9Z,12Z)-octadecadienoate + AH2 + O2 = (9S)-hydroxy-(10E,12Z)-octadecadienoate + A + H2O. The enzyme catalyses (9Z,12Z)-octadecadienoate + AH2 + O2 = (13S)-hydroxy-(9Z,11E)-octadecadienoate + A + H2O. It carries out the reaction (9Z,12Z)-octadecadienoate + AH2 + O2 = (13R)-hydroxy-(9Z,11E)-octadecadienoate + A + H2O. It functions in the pathway lipid metabolism; prostaglandin biosynthesis. Its function is as follows. Dual cyclooxygenase and peroxidase in the biosynthesis pathway of prostanoids, a class of C20 oxylipins mainly derived from arachidonate ((5Z,8Z,11Z,14Z)-eicosatetraenoate, AA, C20:4(n-6)), with a particular role in the inflammatory response. The cyclooxygenase activity oxygenates AA to the hydroperoxy endoperoxide prostaglandin G2 (PGG2), and the peroxidase activity reduces PGG2 to the hydroxy endoperoxide prostaglandin H2 (PGH2), the precursor of all 2-series prostaglandins and thromboxanes. This complex transformation is initiated by abstraction of hydrogen at carbon 13 (with S-stereochemistry), followed by insertion of molecular O2 to form the endoperoxide bridge between carbon 9 and 11 that defines prostaglandins. The insertion of a second molecule of O2 (bis-oxygenase activity) yields a hydroperoxy group in PGG2 that is then reduced to PGH2 by two electrons. Similarly catalyzes successive cyclooxygenation and peroxidation of dihomo-gamma-linoleate (DGLA, C20:3(n-6)) and eicosapentaenoate (EPA, C20:5(n-3)) to corresponding PGH1 and PGH3, the precursors of 1- and 3-series prostaglandins. In an alternative pathway of prostanoid biosynthesis, converts 2-arachidonoyl lysophopholipids to prostanoid lysophopholipids, which are then hydrolyzed by intracellular phospholipases to release free prostanoids. Metabolizes 2-arachidonoyl glycerol yielding the glyceryl ester of PGH2, a process that can contribute to pain response. Generates lipid mediators from n-3 and n-6 polyunsaturated fatty acids (PUFAs) via a lipoxygenase-type mechanism. Oxygenates PUFAs to hydroperoxy compounds and then reduces them to corresponding alcohols. Plays a role in the generation of resolution phase interaction products (resolvins) during both sterile and infectious inflammation. Metabolizes docosahexaenoate (DHA, C22:6(n-3)) to 17R-HDHA, a precursor of the D-series resolvins (RvDs). As a component of the biosynthetic pathway of E-series resolvins (RvEs), converts eicosapentaenoate (EPA, C20:5(n-3)) primarily to 18S-HEPE that is further metabolized by ALOX5 and LTA4H to generate 18S-RvE1 and 18S-RvE2. In vascular endothelial cells, converts docosapentaenoate (DPA, C22:5(n-3)) to 13R-HDPA, a precursor for 13-series resolvins (RvTs) shown to activate macrophage phagocytosis during bacterial infection. In activated leukocytes, contributes to oxygenation of hydroxyeicosatetraenoates (HETE) to diHETES (5,15-diHETE and 5,11-diHETE). Can also use linoleate (LA, (9Z,12Z)-octadecadienoate, C18:2(n-6)) as substrate and produce hydroxyoctadecadienoates (HODEs) in a regio- and stereospecific manner, being (9R)-HODE ((9R)-hydroxy-(10E,12Z)-octadecadienoate) and (13S)-HODE ((13S)-hydroxy-(9Z,11E)-octadecadienoate) its major products. During neuroinflammation, plays a role in neuronal secretion of specialized preresolving mediators (SPMs) 15R-lipoxin A4 that regulates phagocytic microglia. The chain is Prostaglandin G/H synthase 2 (PTGS2) from Bos taurus (Bovine).